Reading from the N-terminus, the 247-residue chain is TLC domain-containing protein 1 (247 aa).

An N-terminal signal peptide occupies residues 1–27 (MPLLFHPAWPLLLGATLTFRALRRVLC). Residues 28-46 (RLPQPAHVQTDPLRTWRWH) lie on the Extracellular side of the membrane. The 195-residue stretch at 40–234 (LRTWRWHNLL…LLRSDFCPER (195 aa)) folds into the TLC domain. The chain crosses the membrane as a helical span at residues 47 to 67 (NLLVSFTHSIVSGIWALLCLW). The Cytoplasmic portion of the chain corresponds to 68-83 (QTPEMLVEIETAWSAS). A helical membrane pass occupies residues 84–104 (GYLLVCFSAGYFIHDTVDIVV). Over 105–123 (SKQTRASWEYLVHHVMAMG) the chain is Extracellular. Positions 124 to 144 (AFFSGIFWKRFVGGGVLTLLV) form an intramembrane region, helical. Over 145 to 173 (EVSNIFLTLRMMMKINNAQDLLLYKVNKY) the chain is Extracellular. A helical membrane pass occupies residues 174–194 (INLVMYFLFRLAPQAYLTKFF). Over 195–201 (LQYAGQR) the chain is Cytoplasmic. A helical membrane pass occupies residues 202–222 (TLGTFLLAILLMLDLMIIIYF). Over 223–247 (SRLLRSDFCPERAPRRQQKDKFLTE) the chain is Extracellular.

It localises to the cell membrane. In terms of biological role, regulates the composition and fluidity of the plasma membrane. Inhibits the incorporation of membrane-fluidizing phospholipids containing omega-3 long-chain polyunsaturated fatty acids (LCPUFA) and thereby promotes membrane rigidity. Does not appear to have any effect on LCPUFA synthesis. This is TLC domain-containing protein 1 (Tlcd1) from Mus musculus (Mouse).